Reading from the N-terminus, the 79-residue chain is RNA-binding protein Hfq (79 aa).

Residues 10–69 (DPFLNALRKEHVPVSIYLVNGIKLQGNIESFDQYVVLLRNTVTQMVYKHAISTVVPARAV) enclose the Sm domain.

The protein belongs to the Hfq family. Homohexamer.

Its function is as follows. RNA chaperone that binds small regulatory RNA (sRNAs) and mRNAs to facilitate mRNA translational regulation in response to envelope stress, environmental stress and changes in metabolite concentrations. Also binds with high specificity to tRNAs. The polypeptide is RNA-binding protein Hfq (Cupriavidus metallidurans (strain ATCC 43123 / DSM 2839 / NBRC 102507 / CH34) (Ralstonia metallidurans)).